The chain runs to 315 residues: MLQIASLFAGVGGIDLGFEQTGYFETVWANEYDKNAAITYQSNFKNKLIIDDIRNIKVEDVPDFDVLLSGFPCTSFSVAGYRKGFEDEKSGDLFFETLRLIVAKKPQVIFLENVKNLVGHDNGNTFKVIYEALESNGYHIKYQVLNAKDFGNIPQNRERIYIVGFRNIEHYKNFNFPMPQPLTLTIKDMINLSDKLDDRFYYTEDKCSFYSPLQEQMTSDETIYQWRRKYVRENKSNVCPTLTANMGTGGHNVPLVKTKHGIRKLTPRECFNFQGYPEDFILPELAPTHLYKQAGNSVVVPVIRRIAENIYKSML.

The 314-residue stretch at Leu2–Leu315 folds into the SAM-dependent MTase C5-type domain. Cys73 is an active-site residue.

It belongs to the class I-like SAM-binding methyltransferase superfamily. C5-methyltransferase family.

It carries out the reaction a 2'-deoxycytidine in DNA + S-adenosyl-L-methionine = a 5-methyl-2'-deoxycytidine in DNA + S-adenosyl-L-homocysteine + H(+). A methylase that recognizes the double-stranded sequence 5'-GCNGC-3', methylates C-? on both strands, and protects the DNA from cleavage by the Bsp6I endonuclease. The protein is Type II methyltransferase M.Bsp6I of Bacillus sp. (strain RFL6).